A 210-amino-acid polypeptide reads, in one-letter code: Ribosomal RNA large subunit methyltransferase E (210 aa).

S-adenosyl-L-methionine contacts are provided by glycine 61, tryptophan 63, aspartate 81, aspartate 97, and aspartate 122. Lysine 162 serves as the catalytic Proton acceptor.

The protein belongs to the class I-like SAM-binding methyltransferase superfamily. RNA methyltransferase RlmE family.

The protein localises to the cytoplasm. It catalyses the reaction uridine(2552) in 23S rRNA + S-adenosyl-L-methionine = 2'-O-methyluridine(2552) in 23S rRNA + S-adenosyl-L-homocysteine + H(+). Functionally, specifically methylates the uridine in position 2552 of 23S rRNA at the 2'-O position of the ribose in the fully assembled 50S ribosomal subunit. This Xanthomonas axonopodis pv. citri (strain 306) protein is Ribosomal RNA large subunit methyltransferase E.